The sequence spans 372 residues: N-methyl-L-tryptophan oxidase (372 aa).

An FAD-binding site is contributed by 4–34 (DLIIIGSGSVGAAAGYYATRAGLKVLMTDAH). The residue at position 307 (Cys307) is an S-8alpha-FAD cysteine.

This sequence belongs to the MSOX/MTOX family. MTOX subfamily. Monomer. The cofactor is FAD.

The enzyme catalyses N(alpha)-methyl-L-tryptophan + O2 + H2O = L-tryptophan + formaldehyde + H2O2. Catalyzes the oxidative demethylation of N-methyl-L-tryptophan. In Salmonella arizonae (strain ATCC BAA-731 / CDC346-86 / RSK2980), this protein is N-methyl-L-tryptophan oxidase.